The primary structure comprises 245 residues: tRNA pseudouridine synthase A 2 (245 aa).

The active-site Nucleophile is the D53. Residue Y111 coordinates substrate.

The protein belongs to the tRNA pseudouridine synthase TruA family. Homodimer.

It carries out the reaction uridine(38/39/40) in tRNA = pseudouridine(38/39/40) in tRNA. Functionally, formation of pseudouridine at positions 38, 39 and 40 in the anticodon stem and loop of transfer RNAs. The polypeptide is tRNA pseudouridine synthase A 2 (Bacillus cereus (strain ATCC 10987 / NRS 248)).